The following is a 1111-amino-acid chain: Kinesin-like protein KIP1 (1111 aa).

Positions 1–11 (MARSSLPNRRT) are enriched in polar residues. The segment at 1–34 (MARSSLPNRRTAQFEANKRRTIAHAPSPSLSNGM) is disordered. The Kinesin motor domain maps to 52–410 (NIHVYVRCRS…LEYATRAKSI (359 aa)). 141–148 (GQTGTGKT) provides a ligand contact to ATP. 4 coiled-coil regions span residues 424 to 510 (TCLK…IIQN), 648 to 670 (KDLN…DIKS), 710 to 780 (KLIK…DQDI), and 808 to 828 (HNAE…TNDL). Positions 1007-1016 (AENKSKDDTS) are enriched in basic and acidic residues. The tract at residues 1007-1111 (AENKSKDDTS…DILQNKKLHQ (105 aa)) is disordered. Composition is skewed to polar residues over residues 1017 to 1038 (NSRT…QFSP) and 1057 to 1082 (SINS…SQNN).

It belongs to the TRAFAC class myosin-kinesin ATPase superfamily. Kinesin family. BimC subfamily. As to quaternary structure, might be dimeric.

Its subcellular location is the cytoplasm. The protein localises to the cytoskeleton. It localises to the spindle. Functionally, required for assembly of the mitotic spindle. Interacts with spindle microtubules to produce an outwardly directed force acting upon the poles. Following spindle assembly, CIN8 and KIP1 apparently act to oppose a force that draws separated poles back together. This force seems to be mediate by KAR3. This chain is Kinesin-like protein KIP1 (KIP1), found in Saccharomyces cerevisiae (strain ATCC 204508 / S288c) (Baker's yeast).